We begin with the raw amino-acid sequence, 529 residues long: Ectonucleoside triphosphate diphosphohydrolase 3 (529 aa).

Topologically, residues 1–22 (MFTVLTRQPCEQAGLKALYRTP) are cytoplasmic. Residues 23–43 (TIIALVVLLVSIVVLVSITVI) traverse the membrane as a helical segment. Residues 44–485 (QIHKQEVLPP…PLIRLPIEPP (442 aa)) lie on the Extracellular side of the membrane. A glycan (N-linked (GlcNAc...) asparagine) is linked at asparagine 81. A disulfide bond links cysteine 92 and cysteine 116. The N-linked (GlcNAc...) asparagine glycan is linked to asparagine 149. Glutamate 182 functions as the Proton acceptor in the catalytic mechanism. ATP is bound at residue 222-226 (GASTQ). The N-linked (GlcNAc...) asparagine glycan is linked to asparagine 238. 3 cysteine pairs are disulfide-bonded: cysteine 261–cysteine 308, cysteine 289–cysteine 334, and cysteine 347–cysteine 353. N-linked (GlcNAc...) asparagine glycosylation is found at asparagine 381, asparagine 392, asparagine 402, and asparagine 454. Cysteine 399 and cysteine 422 form a disulfide bridge. The chain crosses the membrane as a helical span at residues 486-506 (VFVGTLAFFTAAALLCLAFLA). Residues 507–529 (YLCSATRRKRHSEHAFDHAVDSD) lie on the Cytoplasmic side of the membrane.

It belongs to the GDA1/CD39 NTPase family. The cofactor is Ca(2+). It depends on Mg(2+) as a cofactor. As to expression, expressed in adult brain, pancreas, spleen and prostate. Moderate or low expression is seen in most tissues. Not expressed in liver and peripheral blood leukocytes.

It is found in the cell membrane. The catalysed reaction is a ribonucleoside 5'-triphosphate + 2 H2O = a ribonucleoside 5'-phosphate + 2 phosphate + 2 H(+). Has a threefold preference for the hydrolysis of ATP over ADP. The sequence is that of Ectonucleoside triphosphate diphosphohydrolase 3 (ENTPD3) from Homo sapiens (Human).